A 269-amino-acid chain; its full sequence is tRNA uridine(34) hydroxylase (269 aa).

Positions 122 to 216 constitute a Rhodanese domain; it reads QDPEVVLIDV…YLEAIAPEEN (95 aa). Catalysis depends on Cys176, which acts as the Cysteine persulfide intermediate.

The protein belongs to the TrhO family.

The catalysed reaction is uridine(34) in tRNA + AH2 + O2 = 5-hydroxyuridine(34) in tRNA + A + H2O. In terms of biological role, catalyzes oxygen-dependent 5-hydroxyuridine (ho5U) modification at position 34 in tRNAs. The polypeptide is tRNA uridine(34) hydroxylase (Synechococcus elongatus (strain ATCC 33912 / PCC 7942 / FACHB-805) (Anacystis nidulans R2)).